The following is a 296-amino-acid chain: Protoheme IX farnesyltransferase (296 aa).

9 helical membrane-spanning segments follow: residues 13–33 (IIFG…KGII), 35–55 (YPLF…GCVF), 84–104 (VTLI…YIAA), 107–127 (LAMW…SLYM), 132–152 (VYGT…GYCA), 162–182 (LILL…IAIF), 208–228 (ITLY…VGYA), 229–249 (GYKY…MALR), and 264–284 (FVFS…DFSV).

Belongs to the UbiA prenyltransferase family. Protoheme IX farnesyltransferase subfamily.

The protein resides in the cell inner membrane. The enzyme catalyses heme b + (2E,6E)-farnesyl diphosphate + H2O = Fe(II)-heme o + diphosphate. The protein operates within porphyrin-containing compound metabolism; heme O biosynthesis; heme O from protoheme: step 1/1. In terms of biological role, converts heme B (protoheme IX) to heme O by substitution of the vinyl group on carbon 2 of heme B porphyrin ring with a hydroxyethyl farnesyl side group. This chain is Protoheme IX farnesyltransferase, found in Edwardsiella ictaluri (strain 93-146).